The chain runs to 331 residues: Phospho-N-acetylmuramoyl-pentapeptide-transferase (331 aa).

The next 9 membrane-spanning stretches (helical) occupy residues 7–27, 54–74, 78–98, 106–126, 133–153, 154–174, 195–215, 249–269, and 311–331; these read IIYT…LTIP, TIGG…SGLI, LWIA…DDFI, LGLR…ILAI, IMGT…AGFT, ITQT…VVVA, IIAA…LAIF, AIAT…VGGI, and VVIV…LALS.

Belongs to the glycosyltransferase 4 family. MraY subfamily. It depends on Mg(2+) as a cofactor.

The protein resides in the cell membrane. It catalyses the reaction UDP-N-acetyl-alpha-D-muramoyl-L-alanyl-gamma-D-glutamyl-meso-2,6-diaminopimeloyl-D-alanyl-D-alanine + di-trans,octa-cis-undecaprenyl phosphate = di-trans,octa-cis-undecaprenyl diphospho-N-acetyl-alpha-D-muramoyl-L-alanyl-D-glutamyl-meso-2,6-diaminopimeloyl-D-alanyl-D-alanine + UMP. Its pathway is cell wall biogenesis; peptidoglycan biosynthesis. Catalyzes the initial step of the lipid cycle reactions in the biosynthesis of the cell wall peptidoglycan: transfers peptidoglycan precursor phospho-MurNAc-pentapeptide from UDP-MurNAc-pentapeptide onto the lipid carrier undecaprenyl phosphate, yielding undecaprenyl-pyrophosphoryl-MurNAc-pentapeptide, known as lipid I. The protein is Phospho-N-acetylmuramoyl-pentapeptide-transferase of Alkaliphilus metalliredigens (strain QYMF).